The sequence spans 250 residues: Small ribosomal subunit protein uS3 (250 aa).

In terms of domain architecture, KH type-2 spans 39–109 (IRNYVQARLK…EVKIDVVEVI (71 aa)). Basic and acidic residues predominate over residues 225 to 239 (INERRGDSKSRPRDP). Residues 225–250 (INERRGDSKSRPRDPRNKRRRRTKRS) form a disordered region. Positions 240 to 250 (RNKRRRRTKRS) are enriched in basic residues.

The protein belongs to the universal ribosomal protein uS3 family. In terms of assembly, part of the 30S ribosomal subunit. Forms a tight complex with proteins S10 and S14.

Its function is as follows. Binds the lower part of the 30S subunit head. Binds mRNA in the 70S ribosome, positioning it for translation. The protein is Small ribosomal subunit protein uS3 of Chlorobium phaeobacteroides (strain DSM 266 / SMG 266 / 2430).